Here is a 268-residue protein sequence, read N- to C-terminus: Hydroxyethylthiazole kinase 2 (268 aa).

A substrate-binding site is contributed by M42. Positions 117 and 167 each coordinate ATP. Residue G194 participates in substrate binding.

It belongs to the Thz kinase family. Mg(2+) is required as a cofactor.

It catalyses the reaction 5-(2-hydroxyethyl)-4-methylthiazole + ATP = 4-methyl-5-(2-phosphooxyethyl)-thiazole + ADP + H(+). It functions in the pathway cofactor biosynthesis; thiamine diphosphate biosynthesis; 4-methyl-5-(2-phosphoethyl)-thiazole from 5-(2-hydroxyethyl)-4-methylthiazole: step 1/1. Functionally, catalyzes the phosphorylation of the hydroxyl group of 4-methyl-5-beta-hydroxyethylthiazole (THZ). This chain is Hydroxyethylthiazole kinase 2, found in Streptococcus pneumoniae (strain CGSP14).